Reading from the N-terminus, the 212-residue chain is External core antigen (212 aa).

Positions 1-19 are cleaved as a signal peptide; sequence MQLFHLCLIISCSCPTVQA. An HBEAG region spans residues 25-27; sequence GWL. The segment at 172–212 is disordered; that stretch reads LPETTVVRRRGRSPRRRTPSPRRRRSQSPRRRRSQSRESQC. Residues 178–205 show a composition bias toward basic residues; the sequence is VRRRGRSPRRRTPSPRRRRSQSPRRRRS. Residues 184–190 form a 1; half-length repeat; that stretch reads SPRRRTP. The interval 184 to 206 is 3 X 8 AA repeats of S-P-R-R-R-R-S-Q; that stretch reads SPRRRTPSPRRRRSQSPRRRRSQ. The propeptide occupies 184–212; that stretch reads SPRRRTPSPRRRRSQSPRRRRSQSRESQC. Tandem repeats lie at residues 191-198 and 199-206.

It belongs to the orthohepadnavirus precore antigen family. In terms of assembly, homodimerizes. Phosphorylated. Post-translationally, cleaved by host furin.

It is found in the secreted. The protein resides in the host nucleus. May regulate immune response to the intracellular capsid in acting as a T-cell tolerogen, by having an immunoregulatory effect which prevents destruction of infected cells by cytotoxic T-cells. This immune regulation may predispose to chronicity during perinatal infections and prevent severe liver injury during adult infections. The chain is External core antigen from Hepatitis B virus genotype D (isolate Germany/1-91/1991) (HBV-D).